A 33-amino-acid polypeptide reads, in one-letter code: Natriuretic peptide NP2 (33 aa).

Residues C10 and C26 are joined by a disulfide bond.

As to expression, expressed by the venom gland.

The protein resides in the secreted. Its function is as follows. Snake venom natriuretic peptide that shows an increase in perfusion pressure, urinary flow and glomerular filtration rate. Reduces total and proximal tubular transport of sodium. In the aortic ring assay, causes a relaxant effect in endothelium-intact thoracic aortic rings precontracted with phenylephrine in the presence and absence of isatin, a natriuretic receptor antagonist. The chain is Natriuretic peptide NP2 from Crotalus durissus cascavella (Northeastern Brazilian rattlesnake).